Here is a 199-residue protein sequence, read N- to C-terminus: Photosystem I reaction center subunit XI (199 aa).

2 helical membrane-spanning segments follow: residues 108–128 (ITAG…LLVL) and 165–185 (FWLG…TLHL).

This sequence belongs to the PsaL family.

The protein resides in the cellular thylakoid membrane. This Prochlorococcus marinus (strain MIT 9515) protein is Photosystem I reaction center subunit XI.